The following is a 602-amino-acid chain: Elongation factor 4 (602 aa).

Residues 8–189 (KNIRNFSIIA…KIITTIPAPS (182 aa)) form the tr-type G domain. Residues 20 to 25 (DHGKST) and 136 to 139 (NKID) contribute to the GTP site.

This sequence belongs to the TRAFAC class translation factor GTPase superfamily. Classic translation factor GTPase family. LepA subfamily.

It localises to the cell inner membrane. The catalysed reaction is GTP + H2O = GDP + phosphate + H(+). Required for accurate and efficient protein synthesis under certain stress conditions. May act as a fidelity factor of the translation reaction, by catalyzing a one-codon backward translocation of tRNAs on improperly translocated ribosomes. Back-translocation proceeds from a post-translocation (POST) complex to a pre-translocation (PRE) complex, thus giving elongation factor G a second chance to translocate the tRNAs correctly. Binds to ribosomes in a GTP-dependent manner. The protein is Elongation factor 4 of Helicobacter pylori (strain G27).